Reading from the N-terminus, the 338-residue chain is GTP 3',8-cyclase (338 aa).

Residues 8-227 enclose the Radical SAM core domain; the sequence is KLQRPLKDLR…DMIHQVMPLE (220 aa). A GTP-binding site is contributed by Arg-17. Positions 24 and 28 each coordinate [4Fe-4S] cluster. Tyr-30 is a binding site for S-adenosyl-L-methionine. Cys-31 contributes to the [4Fe-4S] cluster binding site. Residue Arg-71 participates in GTP binding. Gly-75 contributes to the S-adenosyl-L-methionine binding site. Thr-102 contacts GTP. Ser-126 serves as a coordination point for S-adenosyl-L-methionine. Lys-163 contacts GTP. Met-197 contributes to the S-adenosyl-L-methionine binding site. Positions 261 and 264 each coordinate [4Fe-4S] cluster. Residue 266 to 268 coordinates GTP; that stretch reads RAR. Cys-278 serves as a coordination point for [4Fe-4S] cluster.

The protein belongs to the radical SAM superfamily. MoaA family. As to quaternary structure, monomer and homodimer. Requires [4Fe-4S] cluster as cofactor.

It carries out the reaction GTP + AH2 + S-adenosyl-L-methionine = (8S)-3',8-cyclo-7,8-dihydroguanosine 5'-triphosphate + 5'-deoxyadenosine + L-methionine + A + H(+). It participates in cofactor biosynthesis; molybdopterin biosynthesis. Its function is as follows. Catalyzes the cyclization of GTP to (8S)-3',8-cyclo-7,8-dihydroguanosine 5'-triphosphate. This is GTP 3',8-cyclase from Bacillus anthracis (strain CDC 684 / NRRL 3495).